The chain runs to 475 residues: Ribulose bisphosphate carboxylase large chain (475 aa).

The propeptide occupies M1–S2. Residue P3 is modified to N-acetylproline. An N6,N6,N6-trimethyllysine modification is found at K14. 2 residues coordinate substrate: N123 and T173. K175 functions as the Proton acceptor in the catalytic mechanism. Residue K177 participates in substrate binding. Residues K201, D203, and E204 each contribute to the Mg(2+) site. Residue K201 is modified to N6-carboxylysine. H294 functions as the Proton acceptor in the catalytic mechanism. Residues R295, H327, and S379 each coordinate substrate.

The protein belongs to the RuBisCO large chain family. Type I subfamily. Heterohexadecamer of 8 large chains and 8 small chains; disulfide-linked. The disulfide link is formed within the large subunit homodimers. The cofactor is Mg(2+). In terms of processing, the disulfide bond which can form in the large chain dimeric partners within the hexadecamer appears to be associated with oxidative stress and protein turnover.

It localises to the plastid. The protein localises to the chloroplast. It catalyses the reaction 2 (2R)-3-phosphoglycerate + 2 H(+) = D-ribulose 1,5-bisphosphate + CO2 + H2O. The catalysed reaction is D-ribulose 1,5-bisphosphate + O2 = 2-phosphoglycolate + (2R)-3-phosphoglycerate + 2 H(+). Functionally, ruBisCO catalyzes two reactions: the carboxylation of D-ribulose 1,5-bisphosphate, the primary event in carbon dioxide fixation, as well as the oxidative fragmentation of the pentose substrate in the photorespiration process. Both reactions occur simultaneously and in competition at the same active site. In Carica papaya (Papaya), this protein is Ribulose bisphosphate carboxylase large chain.